Reading from the N-terminus, the 235-residue chain is Aspartate/glutamate leucyltransferase (235 aa).

The protein belongs to the R-transferase family. Bpt subfamily.

Its subcellular location is the cytoplasm. The enzyme catalyses N-terminal L-glutamyl-[protein] + L-leucyl-tRNA(Leu) = N-terminal L-leucyl-L-glutamyl-[protein] + tRNA(Leu) + H(+). It catalyses the reaction N-terminal L-aspartyl-[protein] + L-leucyl-tRNA(Leu) = N-terminal L-leucyl-L-aspartyl-[protein] + tRNA(Leu) + H(+). Functionally, functions in the N-end rule pathway of protein degradation where it conjugates Leu from its aminoacyl-tRNA to the N-termini of proteins containing an N-terminal aspartate or glutamate. The sequence is that of Aspartate/glutamate leucyltransferase from Pseudomonas syringae pv. syringae (strain B728a).